A 336-amino-acid polypeptide reads, in one-letter code: NADH-cytochrome b5 reductase 2 (336 aa).

A helical transmembrane segment spans residues 28–50; that stretch reads GGSSNGALYVGIGAAGLAGAYIY. The 106-residue stretch at 84–189 folds into the FAD-binding FR-type domain; the sequence is QGFISLLLDK…KGPIPKYPWS (106 aa). 192–227 serves as a coordination point for FAD; the sequence is KHEHIALIAGGTGITPMWQTARAIFKNPEDKTKVTL.

Belongs to the flavoprotein pyridine nucleotide cytochrome reductase family. FAD serves as cofactor.

The protein localises to the mitochondrion outer membrane. The catalysed reaction is 2 Fe(III)-[cytochrome b5] + NADH = 2 Fe(II)-[cytochrome b5] + NAD(+) + H(+). In terms of biological role, may mediate the reduction of outer membrane cytochrome b5. The polypeptide is NADH-cytochrome b5 reductase 2 (MCR1) (Phaeosphaeria nodorum (strain SN15 / ATCC MYA-4574 / FGSC 10173) (Glume blotch fungus)).